A 249-amino-acid polypeptide reads, in one-letter code: Aquaporin (249 aa).

Residues 1–11 (MTRKWIKKLQS) lie on the Cytoplasmic side of the membrane. The helical transmembrane segment at 12–32 (YIGEFFASFIFGFAVYTSIIG) threads the bilayer. The Extracellular segment spans residues 33-39 (SAQTGQS). Residues 40–60 (AGPIIVALTIALSGVAIIYSF) form a helical membrane-spanning segment. Residues 61 to 83 (CDITVAHFNPAITFSAMCFRRLP) lie on the Cytoplasmic side of the membrane. Residues 69 to 71 (NPA) carry the NPA motif. The chain crosses the membrane as a helical span at residues 84-104 (FFGGIFIIIFQVAGFIIAGLA). Residues 105 to 133 (SVAVLPGKYKNKLEIARPKRVADNVSRGR) are Extracellular-facing. Residues 134–154 (IFGTEFFLTAILVYVAFAVGV) traverse the membrane as a helical segment. Residues 155–179 (NPYTPPKDEHGDQLDPDEGLTEGRK) are Cytoplasmic-facing. Residues 180-200 (ITAPLAIGFTLGFCALLGIAS) form a helical membrane-spanning segment. Residues 201–223 (SGGAFNPGIVLSPMILTGTWDFW) are Extracellular-facing. The NPG signature appears at 206–208 (NPG). A helical membrane pass occupies residues 224 to 246 (WVYLLGQFSGGLLGGGLQRFLLY). Topologically, residues 247-249 (KIF) are cytoplasmic.

It belongs to the MIP/aquaporin (TC 1.A.8) family.

Its subcellular location is the cell membrane. Functionally, water channel required to facilitate the transport of water across membranes. Involved in osmotolerance. The sequence is that of Aquaporin (AQP) from Vairimorpha ceranae (strain BRL01) (Microsporidian parasite).